The following is a 488-amino-acid chain: Integrin beta-like protein 1 (488 aa).

A signal peptide spans 1 to 21 (MHAGAFINFVWALSLVSLLAA). Cystine bridges form between C38–C65, C49–C63, C57–C68, C70–C83, C85–C106, C90–C104, C98–C109, C111–C120, C126–C153, C137–C151, C145–C156, C158–C172, C174–C196, C179–C194, C188–C199, C201–C210, C214–C241, C225–C239, C233–C244, C246–C263, C265–C290, C270–C288, C282–C293, C295–C304, C310–C337, C321–C335, C329–C340, C342–C355, C357–C378, C362–C376, C370–C381, C383–C392, C398–C425, C409–C423, C417–C428, C430–C442, C444–C465, C449–C463, C457–C468, and C470–C479. I-EGF domains follow at residues 38–84 (CRLP…PLCE), 85–121 (CHDW…EACQ), 126–173 (CDLT…KYCE), 174–211 (CDDT…DKCE), 214–264 (CDIT…DTCE), 265–305 (CDER…RKCE), 310–356 (CALS…KNCE), 357–393 (CDDR…KLCQ), 398–443 (CNMT…EFCE), and 444–480 (CDDR…NACE). One copy of the I repeat lies at 49-89 (CRTPDGSICSGRGSCDCGICLCEVKEAGKYYGPLCECHDWV). The segment at 49–488 (CRTPDGSICS…CEIWLGSEYP (440 aa)) is cysteine-rich tandem repeats. Residues 90–136 (CHTYDGQVCAGHGQCDCGVCKCDVGWSGEACQYPTTCDLTRKKSNEM) form an II repeat. The III repeat unit spans residues 137-178 (CKNSQAVICSNAGTCQCGRCKCENSDNSGLIYGKYCECDDTE). Residues 179-224 (CFDDETQEICGGHGKCYCGNCYCEAGWHGDKCEFQCDITPWEIKKR) form an IV repeat. Residues 225–269 (CTSPDGKICSNRGTCVCGECTCHDVDPTGDWGDIHGDTCECDERN) form a V repeat. A VI repeat occupies 270 to 320 (CKSVYDRYSDDFCSGHGQCNCGRCDCKDGWTGRKCEHPRACALSIEESKKK). One copy of the VII repeat lies at 321–361 (CQGSASQPCSGRGKCECGQCTCFPPGDSKVYGKNCECDDRQ). The VIII repeat unit spans residues 362 to 408 (CEDLEGKICGEHGTCSCGRCICEAGWFGKLCQHERKCNMTEEESKSQ). An N-linked (GlcNAc...) asparagine glycan is attached at N399. The IX repeat unit spans residues 409–448 (CESDDGILCSGKGSCHCGKCICSPQEWYVSGEFCECDDRD). Residues 449–488 (CDKHDGLICTGNGICNCGNCECWEGWNGNACEIWLGSEYP) form a X repeat.

Its subcellular location is the secreted. This chain is Integrin beta-like protein 1 (itgbl1), found in Xenopus laevis (African clawed frog).